We begin with the raw amino-acid sequence, 211 residues long: Protein 33K (211 aa).

Disordered stretches follow at residues 1-95 and 107-140; these read MPPK…PCSL and AGSP…QDSP. Acidic residues predominate over residues 24-65; sequence DEEETWDDSQAEEVSDEEAEEQMESWDSLDEEDLEDVEEETI. Residues 83–92 are compositionally biased toward pro residues; that stretch reads KTIPPLPPQP. Residues 129 to 140 show a composition bias toward polar residues; it reads TSSAIATRQDSP. Positions 154-181 are necessary for nuclear subcellular location; sequence YAIFQQSRGQQLELKVKNRSLRSLTRSC. An RS-repeat; required for splicing enhancer activity region spans residues 160-180; sequence SRGQQLELKVKNRSLRSLTRS.

The protein belongs to the adenoviridae splicing factor family. In terms of assembly, homooligomer. Interacts with DBP; this interaction occurs at a unique vertex during genome packaging. Interacts with IVa2; this interaction occurs at a unique vertex during genome packaging and seems to potentiate IVa2 and 33K oligomerization. Phosphorylated in vitro by human PKA and PRKDC. PRKDC inhibits, whereas PKA activates the splicing factor.

It is found in the host nucleus. Promotes alternative splicing of late transcripts by promoting splicing at weak 3' splice sites. Required for the temporal activation of major late pre-mRNA splicing at late times of infection. Induces the splicing and expression of the late capsid vertex protein. In terms of biological role, probably functions as the small terminase that is part of the molecular motor that translocates genomic DNA in empty capsid during DNA packaging. This motor is located at a unique vertex and comprises at least the IVa2 ATPase, the small terminase 33K and probably a portal. Forms a ring-like structure of about 17 nm in which genomic DNA is translocated into the capsid. Stimulates IVa2 ATPase activity in the presence of the viral genome. Once the DNA is packaged, the terminase detaches: the 33K protein is present in the empty particles, but not in the mature virions. Also involved in virion assembly. The sequence is that of Protein 33K from Human adenovirus F serotype 40 (HAdV-40).